We begin with the raw amino-acid sequence, 152 residues long: MAGLPRRIIKETQRLLAEPVPGIKAEPDESNARYFHVVIAGPQDSPFEGGTFKLELFLPEEYPMAAPKVRFMTKIYHPNVDKLGRICLDILKDKWSPALQIRTVLLSIQALLSAPNPDDPLANDVAEQWKSNEAQAIETARAWTRLYAMNNI.

In terms of domain architecture, UBC core spans 3–149 (GLPRRIIKET…ARAWTRLYAM (147 aa)). Lys82 bears the N6-acetyllysine mark. Cys87 functions as the Glycyl thioester intermediate in the catalytic mechanism. Lys92 participates in a covalent cross-link: Glycyl lysine isopeptide (Lys-Gly) (interchain with G-Cter in ISG15). A Phosphoserine modification is found at Ser131.

This sequence belongs to the ubiquitin-conjugating enzyme family. Heterodimer with UBE2V2. Interacts (UBE2V2-UBE2N heterodimer) with the E3 ligase STUB1 (via the U-box domain); the complex has a specific 'Lys-63'-linked polyubiquitination activity. Interacts with RNF8 and RNF168. Interacts with RNF11. Interacts with the E3 ligases, HLTF and SHPRH; the interactions promote the 'Lys-63'-linked polyubiquitination of PCNA upon genotoxic stress and lead to DNA repair. Interacts with ARIH2 (via RING-type 2). Interacts with OTUB1; leading to inhibit E2-conjugating activity. Interacts with GPS2; leading to inhibit E2-conjugating activity. Interacts with RIGI and RNF135; involved in RIGI ubiquitination and activation. Post-translationally, conjugation to ISG15 impairs formation of the thioester bond with ubiquitin but not interaction with UBE2V2.

The catalysed reaction is S-ubiquitinyl-[E1 ubiquitin-activating enzyme]-L-cysteine + [E2 ubiquitin-conjugating enzyme]-L-cysteine = [E1 ubiquitin-activating enzyme]-L-cysteine + S-ubiquitinyl-[E2 ubiquitin-conjugating enzyme]-L-cysteine.. Its pathway is protein modification; protein ubiquitination. Its activity is regulated as follows. Activity is inhibited by binding to OTUB1, which prevents 'Lys-63'-linked polyubiquitination. Activity is inhibited by GPS2, leading to prevent 'Lys-63'-linked polyubiquitination. Functionally, the UBE2V1-UBE2N and UBE2V2-UBE2N heterodimers catalyze the synthesis of non-canonical 'Lys-63'-linked polyubiquitin chains. This type of polyubiquitination does not lead to protein degradation by the proteasome. Mediates transcriptional activation of target genes. Plays a role in the control of progress through the cell cycle and differentiation. Plays a role in the error-free DNA repair pathway and contributes to the survival of cells after DNA damage. Acts together with the E3 ligases, HLTF and SHPRH, in the 'Lys-63'-linked poly-ubiquitination of PCNA upon genotoxic stress, which is required for DNA repair. Appears to act together with E3 ligase RNF5 in the 'Lys-63'-linked polyubiquitination of JKAMP thereby regulating JKAMP function by decreasing its association with components of the proteasome and ERAD. Promotes TRIM5 capsid-specific restriction activity and the UBE2V1-UBE2N heterodimer acts in concert with TRIM5 to generate 'Lys-63'-linked polyubiquitin chains which activate the MAP3K7/TAK1 complex which in turn results in the induction and expression of NF-kappa-B and MAPK-responsive inflammatory genes. Together with RNF135 and UB2V1, catalyzes the viral RNA-dependent 'Lys-63'-linked polyubiquitination of RIGI to activate the downstream signaling pathway that leads to interferon beta production. UBE2V1-UBE2N together with TRAF3IP2 E3 ubiquitin ligase mediate 'Lys-63'-linked polyubiquitination of TRAF6, a component of IL17A-mediated signaling pathway. This chain is Ubiquitin-conjugating enzyme E2 N (Ube2n), found in Rattus norvegicus (Rat).